The primary structure comprises 286 residues: Shikimate dehydrogenase (NADP(+)) (286 aa).

Shikimate contacts are provided by residues 22-24 (SRS) and Thr-71. The active-site Proton acceptor is the Lys-75. Glu-87 contributes to the NADP(+) binding site. Residues Asn-96 and Asp-111 each coordinate shikimate. NADP(+) is bound by residues 136–140 (GAGGA), 160–165 (NRTPER), and Ile-225. Tyr-227 is a shikimate binding site. Position 248 (Gly-248) interacts with NADP(+).

It belongs to the shikimate dehydrogenase family. As to quaternary structure, homodimer.

The enzyme catalyses shikimate + NADP(+) = 3-dehydroshikimate + NADPH + H(+). The protein operates within metabolic intermediate biosynthesis; chorismate biosynthesis; chorismate from D-erythrose 4-phosphate and phosphoenolpyruvate: step 4/7. Involved in the biosynthesis of the chorismate, which leads to the biosynthesis of aromatic amino acids. Catalyzes the reversible NADPH linked reduction of 3-dehydroshikimate (DHSA) to yield shikimate (SA). This Sinorhizobium medicae (strain WSM419) (Ensifer medicae) protein is Shikimate dehydrogenase (NADP(+)).